The primary structure comprises 256 residues: Imidazole glycerol phosphate synthase subunit HisF (256 aa).

Catalysis depends on residues Asp12 and Asp131.

This sequence belongs to the HisA/HisF family. As to quaternary structure, heterodimer of HisH and HisF.

Its subcellular location is the cytoplasm. The enzyme catalyses 5-[(5-phospho-1-deoxy-D-ribulos-1-ylimino)methylamino]-1-(5-phospho-beta-D-ribosyl)imidazole-4-carboxamide + L-glutamine = D-erythro-1-(imidazol-4-yl)glycerol 3-phosphate + 5-amino-1-(5-phospho-beta-D-ribosyl)imidazole-4-carboxamide + L-glutamate + H(+). The protein operates within amino-acid biosynthesis; L-histidine biosynthesis; L-histidine from 5-phospho-alpha-D-ribose 1-diphosphate: step 5/9. Functionally, IGPS catalyzes the conversion of PRFAR and glutamine to IGP, AICAR and glutamate. The HisF subunit catalyzes the cyclization activity that produces IGP and AICAR from PRFAR using the ammonia provided by the HisH subunit. The sequence is that of Imidazole glycerol phosphate synthase subunit HisF from Bifidobacterium longum (strain NCC 2705).